Reading from the N-terminus, the 149-residue chain is D-aminoacyl-tRNA deacylase (149 aa).

The short motif at 137-138 is the Gly-cisPro motif, important for rejection of L-amino acids element; sequence GP.

Belongs to the DTD family. Homodimer.

Its subcellular location is the cytoplasm. It catalyses the reaction glycyl-tRNA(Ala) + H2O = tRNA(Ala) + glycine + H(+). The catalysed reaction is a D-aminoacyl-tRNA + H2O = a tRNA + a D-alpha-amino acid + H(+). In terms of biological role, an aminoacyl-tRNA editing enzyme that deacylates mischarged D-aminoacyl-tRNAs. Also deacylates mischarged glycyl-tRNA(Ala), protecting cells against glycine mischarging by AlaRS. Acts via tRNA-based rather than protein-based catalysis; rejects L-amino acids rather than detecting D-amino acids in the active site. By recycling D-aminoacyl-tRNA to D-amino acids and free tRNA molecules, this enzyme counteracts the toxicity associated with the formation of D-aminoacyl-tRNA entities in vivo and helps enforce protein L-homochirality. This Clostridium botulinum (strain Alaska E43 / Type E3) protein is D-aminoacyl-tRNA deacylase.